Consider the following 74-residue polypeptide: Conotoxin Cal27 (74 aa).

The signal sequence occupies residues methionine 1–alanine 19.

Post-translationally, may contain 4 disulfide bonds. Expressed by the venom duct.

It is found in the secreted. Functionally, probable neurotoxin. This Californiconus californicus (California cone) protein is Conotoxin Cal27.